The sequence spans 592 residues: NADH-quinone oxidoreductase subunit C/D (592 aa).

An NADH dehydrogenase I subunit C region spans residues 1 to 183; that stretch reads MSAAQSPTAQ…DPYTLTVEGQ (183 aa). The interval 207–592 is NADH dehydrogenase I subunit D; that stretch reads DYMFLNLGPN…IDFVMADVDR (386 aa).

In the N-terminal section; belongs to the complex I 30 kDa subunit family. It in the C-terminal section; belongs to the complex I 49 kDa subunit family. NDH-1 is composed of 13 different subunits. Subunits NuoB, CD, E, F, and G constitute the peripheral sector of the complex.

Its subcellular location is the cell inner membrane. It catalyses the reaction a quinone + NADH + 5 H(+)(in) = a quinol + NAD(+) + 4 H(+)(out). Its function is as follows. NDH-1 shuttles electrons from NADH, via FMN and iron-sulfur (Fe-S) centers, to quinones in the respiratory chain. The immediate electron acceptor for the enzyme in this species is believed to be ubiquinone. Couples the redox reaction to proton translocation (for every two electrons transferred, four hydrogen ions are translocated across the cytoplasmic membrane), and thus conserves the redox energy in a proton gradient. In Chromohalobacter salexigens (strain ATCC BAA-138 / DSM 3043 / CIP 106854 / NCIMB 13768 / 1H11), this protein is NADH-quinone oxidoreductase subunit C/D.